We begin with the raw amino-acid sequence, 109 residues long: Tyrosine-protein phosphatase 16 (109 aa).

Positions 1-109 constitute a Tyrosine-protein phosphatase domain; that stretch reads WRMVTEHTST…RIKTQKPIVV (109 aa). Asp81 provides a ligand contact to substrate.

The protein belongs to the protein-tyrosine phosphatase family.

It catalyses the reaction O-phospho-L-tyrosyl-[protein] + H2O = L-tyrosyl-[protein] + phosphate. The sequence is that of Tyrosine-protein phosphatase 16 (STY-16) from Styela plicata (Wrinkled sea squirt).